Reading from the N-terminus, the 164-residue chain is 2S albumin seed storage protein PINP1 (164 aa).

The signal sequence occupies residues 1–29; it reads MGVFSSPMSTLRWVTLFAALLSLLEWGTA. A compositionally biased stretch (low complexity) spans 92-107; sequence DQSQSYDSSTDSDSQD. The tract at residues 92–137 is disordered; it reads DQSQSYDSSTDSDSQDGAPLNQRRRRRGEGRGREEEEAVERAEELP. Residues 120-137 show a composition bias toward basic and acidic residues; sequence EGRGREEEEAVERAEELP. The N-linked (GalNAc...) asparagine glycan is linked to Asn138.

This sequence belongs to the 2S seed storage albumins family.

In Pinus pinea (Italian stone pine), this protein is 2S albumin seed storage protein PINP1.